We begin with the raw amino-acid sequence, 145 residues long: D-aminoacyl-tRNA deacylase (145 aa).

The Gly-cisPro motif, important for rejection of L-amino acids motif lies at 137 to 138 (GP).

It belongs to the DTD family. In terms of assembly, homodimer.

It localises to the cytoplasm. The catalysed reaction is glycyl-tRNA(Ala) + H2O = tRNA(Ala) + glycine + H(+). It carries out the reaction a D-aminoacyl-tRNA + H2O = a tRNA + a D-alpha-amino acid + H(+). An aminoacyl-tRNA editing enzyme that deacylates mischarged D-aminoacyl-tRNAs. Also deacylates mischarged glycyl-tRNA(Ala), protecting cells against glycine mischarging by AlaRS. Acts via tRNA-based rather than protein-based catalysis; rejects L-amino acids rather than detecting D-amino acids in the active site. By recycling D-aminoacyl-tRNA to D-amino acids and free tRNA molecules, this enzyme counteracts the toxicity associated with the formation of D-aminoacyl-tRNA entities in vivo and helps enforce protein L-homochirality. This Cronobacter sakazakii (strain ATCC BAA-894) (Enterobacter sakazakii) protein is D-aminoacyl-tRNA deacylase.